Here is a 419-residue protein sequence, read N- to C-terminus: C2 calcium-dependent domain-containing protein 4C (419 aa).

Disordered regions lie at residues 1 to 96, 115 to 136, 151 to 225, and 247 to 300; these read MRKT…LASE, EDWTAEEATNADPQAQGAMSLP, AESP…SPFG, and VSQL…HTVK. Over residues 75 to 94 the composition is skewed to low complexity; that stretch reads LASPGPRRAPRSPRLPAKLA. Over residues 186–196 the composition is skewed to gly residues; it reads KGNGGDGGSRE. Residues 212–225 show a composition bias toward polar residues; it reads ESDTGSSAESSPFG. A phosphoserine mark is found at S259, S261, and S270. The 117-residue stretch at 303-419 folds into the C2 domain; sequence TRGSVRLLAE…LPLTSLLPFL (117 aa).

Belongs to the C2CD4 family.

This is C2 calcium-dependent domain-containing protein 4C (C2cd4c) from Mus musculus (Mouse).